The chain runs to 294 residues: Foldase protein PrsA 1 (294 aa).

A signal peptide spans 1 to 21 (MTKLKKVMISLVAATLLLLAG). A lipid anchor (N-palmitoyl cysteine) is attached at cysteine 22. A lipid anchor (S-diacylglycerol cysteine) is attached at cysteine 22. The 92-residue stretch at 135–226 (EPNITVRHIL…YGYHLIQLVK (92 aa)) folds into the PpiC domain.

The protein belongs to the PrsA family.

It is found in the cell membrane. It catalyses the reaction [protein]-peptidylproline (omega=180) = [protein]-peptidylproline (omega=0). Functionally, plays a major role in protein secretion by helping the post-translocational extracellular folding of several secreted proteins. This Listeria innocua serovar 6a (strain ATCC BAA-680 / CLIP 11262) protein is Foldase protein PrsA 1 (prsA1).